A 295-amino-acid polypeptide reads, in one-letter code: Hepatic leukemia factor (295 aa).

The segment covering 37 to 52 has biased composition (basic and acidic residues); that stretch reads EDAFSKDKDKEKKLDD. Disordered stretches follow at residues 37 to 70 and 93 to 167; these read EDAF…PTLW and SENG…IDPD. The 64-residue stretch at 225–288 folds into the bZIP domain; sequence DDKYWARRRK…GKCKNILAKY (64 aa). Residues 227–247 form a basic motif region; the sequence is KYWARRRKNNMAAKRSRDARR. The tract at residues 248–255 is leucine-zipper; that stretch reads LKENQIAI.

Belongs to the bZIP family. PAR subfamily. In terms of assembly, binds DNA specifically as homodimer or heterodimer with other PAR factors. In terms of tissue distribution, highly expressed in liver; lower levels in lung and kidney.

Its subcellular location is the nucleus. This Homo sapiens (Human) protein is Hepatic leukemia factor (HLF).